We begin with the raw amino-acid sequence, 478 residues long: Light-independent protochlorophyllide reductase subunit N (478 aa).

3 residues coordinate [4Fe-4S] cluster: Cys22, Cys47, and Cys107.

This sequence belongs to the BchN/ChlN family. Protochlorophyllide reductase is composed of three subunits; ChlL, ChlN and ChlB. Forms a heterotetramer of two ChlB and two ChlN subunits. [4Fe-4S] cluster serves as cofactor.

It is found in the plastid. Its subcellular location is the chloroplast. It carries out the reaction chlorophyllide a + oxidized 2[4Fe-4S]-[ferredoxin] + 2 ADP + 2 phosphate = protochlorophyllide a + reduced 2[4Fe-4S]-[ferredoxin] + 2 ATP + 2 H2O. The protein operates within porphyrin-containing compound metabolism; chlorophyll biosynthesis (light-independent). Component of the dark-operative protochlorophyllide reductase (DPOR) that uses Mg-ATP and reduced ferredoxin to reduce ring D of protochlorophyllide (Pchlide) to form chlorophyllide a (Chlide). This reaction is light-independent. The NB-protein (ChlN-ChlB) is the catalytic component of the complex. In Chlorokybus atmophyticus (Soil alga), this protein is Light-independent protochlorophyllide reductase subunit N.